The primary structure comprises 354 residues: MGCTLSAEDKAAVERSKMIDRNLREDGEKAAKEVKLLLLGAGESGKSTIVKQMKIIHEDGYSEDECKQYKVVVYSNTIQSIIAIIRAMGRLKIDFGEAARADDARQLFVLAGSAEEGVMTSELAGVIKRLWRDGGVQACFSRSREYQLNDSASYYLNDLDRISQTNYIPTQQDVLRTRVKTTGIVETHFTFKELYFKMFDVGGQRSERKKWIHCFEGVTAIIFCVALSDYDLVLAEDEEMNRMHESMKLFDSICNNKWFTDTSIILFLNKKDLFEEKIKRSPLTICYPEYTGSNTYEEAAAYIQCQFEDLNRRKDTKEVYTHFTCATDTKNVQFVFDAVTDVIIKNNLKECGLY.

Glycine 2 carries the N-myristoyl glycine lipid modification. A lipid anchor (S-palmitoyl cysteine) is attached at cysteine 3. The 323-residue stretch at 32–354 folds into the G-alpha domain; that stretch reads KEVKLLLLGA…KNNLKECGLY (323 aa). A G1 motif region spans residues 35 to 48; sequence KLLLLGAGESGKST. The GTP site is built by glycine 42, glutamate 43, serine 44, glycine 45, lysine 46, serine 47, threonine 48, aspartate 150, serine 151, leucine 175, arginine 176, threonine 177, arginine 178, valine 179, lysine 180, threonine 181, valine 201, glycine 203, asparagine 269, lysine 270, aspartate 272, leucine 273, cysteine 325, alanine 326, and threonine 327. Serine 47 contacts Mg(2+). The interval 173 to 181 is G2 motif; sequence DVLRTRVKT. Mg(2+) is bound at residue threonine 181. The segment at 196-205 is G3 motif; that stretch reads FKMFDVGGQR. The interval 265–272 is G4 motif; sequence ILFLNKKD. Positions 324 to 329 are G5 motif; sequence TCATDT.

It belongs to the G-alpha family. G(i/o/t/z) subfamily. As to quaternary structure, heterotrimeric G proteins are composed of 3 units; alpha, beta and gamma. The alpha subunit contains the guanine nucleotide binding site. GTP binding causes dissociation of the heterotrimer, liberating the individual subunits so that they can interact with downstream effector proteins. Forms a complex with CCDC88A/GIV and EGFR which leads to enhanced EGFR signaling and triggering of cell migration; ligand stimulation is required for recruitment of GNAI3 to the complex. Interacts (inactive GDP-bound form) with CCDC88A/GIV (via GBA motif); the interaction leads to activation of GNAI3. Interacts (inactive GDP-bound form) with CCDC88C/DAPLE (via GBA motif); the interaction leads to activation of GNAI3. Interacts (inactive GDP-bound form) with NUCB1 (via GBA motif) and NUCB2 (via GBA motif); the interaction leads to activation of GNAI3. Interacts (inactive GDP-bound form) with PLCD4 (via GBA motif); the interaction leads to activation of GNAI3. Interacts with INSR; the interaction is probably mediated by CCDC88A/GIV. Interacts with GPSM1. Interacts (GDP-bound form) with GPSM2 (via GoLoco domains). Does not interact with RGS2. Interacts with RGS8 and RGS10; this strongly enhances the intrinsic GTPase activity. Interacts with RGS12. Interacts with RGS16; this strongly enhances the intrinsic GTPase activity. Interacts (via active GTP- or inactive GDP-bound form) with RGS14. Interacts (via active GTP-bound form) with TRPC5 (via ANK repeats) in a homotetrameric ion channel; the interaction is direct and activates the channel activity. Ubiquitous.

It is found in the cytoplasm. It localises to the cell membrane. The protein localises to the cytoskeleton. Its subcellular location is the microtubule organizing center. The protein resides in the centrosome. In terms of biological role, heterotrimeric guanine nucleotide-binding proteins (G proteins) function as transducers downstream of G protein-coupled receptors (GPCRs) in numerous signaling cascades. The alpha chain contains the guanine nucleotide binding site and alternates between an active, GTP-bound state and an inactive, GDP-bound state. Signaling by an activated GPCR promotes GDP release and GTP binding. The alpha subunit has a low GTPase activity that converts bound GTP to GDP, thereby terminating the signal. Both GDP release and GTP hydrolysis are modulated by numerous regulatory proteins. Signaling is mediated via effector proteins, such as adenylate cyclase. Inhibits adenylate cyclase activity, leading to decreased intracellular cAMP levels. Stimulates the activity of receptor-regulated K(+) channels. The active GTP-bound form prevents the association of RGS14 with centrosomes and is required for the translocation of RGS14 from the cytoplasm to the plasma membrane. May play a role in cell division. The active GTP-bound form activates the calcium permeant TRPC5 ion channels. This Rattus norvegicus (Rat) protein is Guanine nucleotide-binding protein G(i) subunit alpha-3 (Gnai3).